Here is a 201-residue protein sequence, read N- to C-terminus: Ribosome maturation factor RimP (201 aa).

It belongs to the RimP family.

The protein localises to the cytoplasm. Its function is as follows. Required for maturation of 30S ribosomal subunits. This chain is Ribosome maturation factor RimP, found in Rhizobium leguminosarum bv. trifolii (strain WSM2304).